Consider the following 156-residue polypeptide: Regulatory protein RecX (156 aa).

Belongs to the RecX family.

The protein resides in the cytoplasm. In terms of biological role, modulates RecA activity. The protein is Regulatory protein RecX of Pseudomonas putida (strain W619).